We begin with the raw amino-acid sequence, 162 residues long: Nucleotide-binding protein Francci3_0558 (162 aa).

It belongs to the YajQ family.

Its function is as follows. Nucleotide-binding protein. This chain is Nucleotide-binding protein Francci3_0558, found in Frankia casuarinae (strain DSM 45818 / CECT 9043 / HFP020203 / CcI3).